The following is a 259-amino-acid chain: MLAKRIIPCLDVTGGRVVKGVNFVELRDAGDPVEIAARYNAQGADELTFLDITATSDERDLILPIIEAVASQVFIPLTVGGGVRTVEDVRRLLNAGADKTSFNSAAIANPDVISQASAKYGAQCIVVAIDAKRRQGAEVAERGEGWDVYSHGGRKNTGLDAVQWAVEMARRGAGEILLTSMDRDGTKSGFDLQLTRAVSDAVGVPVIASGGVGNLDHLADGVQQGGADAVLAASIFHYGEFTVRQAKERMRERGIPVRL.

Active-site residues include Asp11 and Asp130.

The protein belongs to the HisA/HisF family. As to quaternary structure, heterodimer of HisH and HisF.

It localises to the cytoplasm. The enzyme catalyses 5-[(5-phospho-1-deoxy-D-ribulos-1-ylimino)methylamino]-1-(5-phospho-beta-D-ribosyl)imidazole-4-carboxamide + L-glutamine = D-erythro-1-(imidazol-4-yl)glycerol 3-phosphate + 5-amino-1-(5-phospho-beta-D-ribosyl)imidazole-4-carboxamide + L-glutamate + H(+). It functions in the pathway amino-acid biosynthesis; L-histidine biosynthesis; L-histidine from 5-phospho-alpha-D-ribose 1-diphosphate: step 5/9. Functionally, IGPS catalyzes the conversion of PRFAR and glutamine to IGP, AICAR and glutamate. The HisF subunit catalyzes the cyclization activity that produces IGP and AICAR from PRFAR using the ammonia provided by the HisH subunit. In Acidovorax ebreus (strain TPSY) (Diaphorobacter sp. (strain TPSY)), this protein is Imidazole glycerol phosphate synthase subunit HisF.